A 20-amino-acid chain; its full sequence is Toxin CpTx-4a (20 aa).

The protein belongs to the spider toxin CSTX family. Expressed by the venom gland.

It is found in the secreted. In terms of biological role, spider venom toxin that exhibits cytolytic activity by forming an alpha-helix across the membrane. Lethal to insect larvae. The chain is Toxin CpTx-4a from Cheiracanthium punctorium (Yellow sac spider).